Here is a 579-residue protein sequence, read N- to C-terminus: Protein inscuteable homolog (579 aa).

The segment at 74 to 89 is important for interaction with GPSM2; the sequence is SVQRWMEDLKLMTECE. A PDZ-binding motif is present at residues 576–579; that stretch reads ESFV.

Interacts with ALS2CR19/PAR3B and F2RL2/PAR3. Interacts with GPSM1/AGS3 and GPSM2/LGN (via TPR repeat region). Identified in a complex with GPSM2 and F2RL2. Isoform 1 is expressed in various tissues with stronger expression in liver, kidney and small intestine. Isoform 2 is abundantly expressed in small intestine and to a lower extent in lung and pancreas.

It localises to the cytoplasm. The protein localises to the cell cortex. May function as an adapter linking the Par3 complex to the GPSM1/GPSM2 complex. Involved in spindle orientation during mitosis. May regulate cell proliferation and differentiation in the developing nervous system. May play a role in the asymmetric division of fibroblasts and participate in the process of stratification of the squamous epithelium. This Homo sapiens (Human) protein is Protein inscuteable homolog (INSC).